The primary structure comprises 244 residues: Cell division protein ZapD (244 aa).

Belongs to the ZapD family. Interacts with FtsZ.

It is found in the cytoplasm. In terms of biological role, cell division factor that enhances FtsZ-ring assembly. Directly interacts with FtsZ and promotes bundling of FtsZ protofilaments, with a reduction in FtsZ GTPase activity. This Shewanella baltica (strain OS223) protein is Cell division protein ZapD.